A 141-amino-acid chain; its full sequence is Endoribonuclease YbeY (141 aa).

Positions 105, 109, and 115 each coordinate Zn(2+).

The protein belongs to the endoribonuclease YbeY family. Zn(2+) serves as cofactor.

It is found in the cytoplasm. Its function is as follows. Single strand-specific metallo-endoribonuclease involved in late-stage 70S ribosome quality control and in maturation of the 3' terminus of the 16S rRNA. This chain is Endoribonuclease YbeY, found in Chloroherpeton thalassium (strain ATCC 35110 / GB-78).